Consider the following 72-residue polypeptide: UPF0150 protein jhp_0960 (72 aa).

The protein belongs to the UPF0150 family.

The protein is UPF0150 protein jhp_0960 of Helicobacter pylori (strain J99 / ATCC 700824) (Campylobacter pylori J99).